Reading from the N-terminus, the 380-residue chain is GPI-anchor transamidase (380 aa).

Positions 1–19 are cleaved as a signal peptide; that stretch reads MIVQFVALLLLNLLQIIAA. Residues 20–354 are Lumenal-facing; the sequence is ESSHTNNWAV…TRELKYKKHP (335 aa). Catalysis depends on residues His145 and Cys187. An N-linked (GlcNAc...) asparagine glycan is attached at Asn307. A helical membrane pass occupies residues 355 to 375; that stretch reads ISRIISAVVCISFSIGFPYYA. Over 376 to 380 the chain is Cytoplasmic; it reads SKYLK.

Belongs to the peptidase C13 family. Forms a complex with PIG-T homolog, PIG-U homolog and PIG-S homolog. The disulfide bond between PIGK/GPI8 and PIGT is important for normal enzyme activity.

The protein localises to the endoplasmic reticulum membrane. The protein operates within glycolipid biosynthesis; glycosylphosphatidylinositol-anchor biosynthesis. Mediates GPI anchoring in the endoplasmic reticulum, by replacing a protein's C-terminal GPI attachment signal peptide with a pre-assembled GPI. During this transamidation reaction, the GPI transamidase forms a carbonyl intermediate with the substrate protein. The protein is GPI-anchor transamidase (gpi8) of Schizosaccharomyces pombe (strain 972 / ATCC 24843) (Fission yeast).